A 341-amino-acid chain; its full sequence is Phosphoribosylformylglycinamidine cyclo-ligase (341 aa).

The protein belongs to the AIR synthase family.

The protein localises to the cytoplasm. It carries out the reaction 2-formamido-N(1)-(5-O-phospho-beta-D-ribosyl)acetamidine + ATP = 5-amino-1-(5-phospho-beta-D-ribosyl)imidazole + ADP + phosphate + H(+). The protein operates within purine metabolism; IMP biosynthesis via de novo pathway; 5-amino-1-(5-phospho-D-ribosyl)imidazole from N(2)-formyl-N(1)-(5-phospho-D-ribosyl)glycinamide: step 2/2. The chain is Phosphoribosylformylglycinamidine cyclo-ligase from Finegoldia magna (strain ATCC 29328 / DSM 20472 / WAL 2508) (Peptostreptococcus magnus).